Consider the following 431-residue polypeptide: UDP-N-acetylmuramate--L-alanine ligase (431 aa).

108–114 provides a ligand contact to ATP; that stretch reads GAHGKST.

Belongs to the MurCDEF family.

Its subcellular location is the cytoplasm. It carries out the reaction UDP-N-acetyl-alpha-D-muramate + L-alanine + ATP = UDP-N-acetyl-alpha-D-muramoyl-L-alanine + ADP + phosphate + H(+). The protein operates within cell wall biogenesis; peptidoglycan biosynthesis. Its function is as follows. Cell wall formation. The protein is UDP-N-acetylmuramate--L-alanine ligase of Campylobacter jejuni subsp. doylei (strain ATCC BAA-1458 / RM4099 / 269.97).